Here is a 117-residue protein sequence, read N- to C-terminus: uncharacterized protein (117 aa).

It is found in the plastid. Its subcellular location is the chloroplast. This is an uncharacterized protein from Chlamydomonas reinhardtii (Chlamydomonas smithii).